Consider the following 573-residue polypeptide: Adenine deaminase 2 (573 aa).

It belongs to the metallo-dependent hydrolases superfamily. Adenine deaminase family. It depends on Mn(2+) as a cofactor.

It catalyses the reaction adenine + H2O + H(+) = hypoxanthine + NH4(+). The sequence is that of Adenine deaminase 2 from Shouchella clausii (strain KSM-K16) (Alkalihalobacillus clausii).